A 393-amino-acid polypeptide reads, in one-letter code: Squamosa promoter-binding-like protein 17 (393 aa).

Residues 40–49 (AAAVESSSTS) are compositionally biased toward low complexity. A disordered region spans residues 40-67 (AAAVESSSTSSGGGGKKGKGVAAAAAPP). Residues 71 to 148 (PPRCQVEGCG…AGHNERRRKP (78 aa)) form an SBP-type zinc finger. Residues Cys74, Cys79, Cys96, His99, Cys115, Cys118, His122, and Cys134 each coordinate Zn(2+). The short motif at 131 to 147 (KKSCRRRLAGHNERRRK) is the Bipartite nuclear localization signal element. Basic residues predominate over residues 137-148 (RLAGHNERRRKP). Disordered stretches follow at residues 137 to 158 (RLAG…SRYG), 273 to 301 (WDTT…GNNP), and 317 to 393 (GWNS…NWSL). 2 stretches are compositionally biased toward polar residues: residues 273 to 293 (WDTT…STAS) and 380 to 393 (GAFS…NWSL).

In terms of tissue distribution, expressed in young panicles.

It is found in the nucleus. Functionally, trans-acting factor that binds specifically to the consensus nucleotide sequence 5'-TNCGTACAA-3'. May be involved in panicle development. This chain is Squamosa promoter-binding-like protein 17 (SPL17), found in Oryza sativa subsp. japonica (Rice).